Consider the following 166-residue polypeptide: Small ribosomal subunit protein uS9 (166 aa).

Over residues 1–16 (MSDTTNEVEETYEVDE) the composition is skewed to acidic residues. A disordered region spans residues 1–45 (MSDTTNEVEETYEVDEQGIAYSSESAPSADAPLRPATIAPANATG).

It belongs to the universal ribosomal protein uS9 family.

The chain is Small ribosomal subunit protein uS9 from Nocardioides sp. (strain ATCC BAA-499 / JS614).